A 1276-amino-acid polypeptide reads, in one-letter code: Component of gems protein 5 (1276 aa).

Residues 53-55 (NWY) form an interaction with U4 snRNA region. WD repeat units follow at residues 92–139 (GHTD…DDHN), 183–223 (EHKA…VFPI), 228–268 (GNNI…TVCK), 271–336 (AHSA…IESG), 364–405 (NDKQ…SPPE), 438–481 (TTKN…IKIQ), 485–522 (GFVY…KDAY), and 530–574 (GIQS…SKIF). The disordered stretch occupies residues 138–157 (HNEDTEIGDDFKHGSGGGGS). The tract at residues 586–652 (IWKPPPTPTP…NSNNEQQPNK (67 aa)) is disordered. Residues 598–646 (NINNNNNNNNNNNNNNNNNNNNNNNNNNNNNNNNNNNNINNNNNNNSNN) are compositionally biased toward low complexity. 2 WD repeats span residues 688–727 (TFSK…LTRI) and 729–771 (EHKK…NQNE). A compositionally biased stretch (basic and acidic residues) spans 772 to 793 (NEKKIDNEKGKENENEKGKENE). The disordered stretch occupies residues 772–809 (NEKKIDNEKGKENENEKGKENENENENENENENENENE). The stretch at 778–829 (NEKGKENENEKGKENENENENENENENENENENEIENIVNNNNENDTEIEIK) forms a coiled coil. Residues 794 to 809 (NENENENENENENENE) show a composition bias toward acidic residues. 2 WD repeats span residues 863–903 (GHKN…AISN) and 906–946 (GHDG…FKTV). The disordered stretch occupies residues 967 to 997 (ITEQQQQQQQPQSPIKSNPDQSNNPSLVPPI). The segment covering 979–992 (SPIKSNPDQSNNPS) has biased composition (polar residues).

The protein belongs to the WD repeat gemin-5 family. Part of the core SMN complex.

Its subcellular location is the nucleus. The protein localises to the nucleoplasm. It localises to the gem. The protein resides in the cytoplasm. The SMN complex catalyzes the assembly of small nuclear ribonucleoproteins (snRNPs), the building blocks of the spliceosome, and thereby plays an important role in the splicing of cellular pre-mRNAs. Most spliceosomal snRNPs contain a common set of Sm proteins SNRPB, SNRPD1, SNRPD2, SNRPD3, SNRPE, SNRPF and SNRPG that assemble in a heptameric protein ring on the Sm site of the small nuclear RNA to form the core snRNP (Sm core). In the cytosol, the Sm proteins SNRPD1, SNRPD2, SNRPE, SNRPF and SNRPG are trapped in an inactive 6S pICln-Sm complex by the chaperone CLNS1A that controls the assembly of the core snRNP. To assemble core snRNPs, the SMN complex accepts the trapped 5Sm proteins from CLNS1A forming an intermediate. Binding of snRNA inside 5Sm ultimately triggers eviction of the SMN complex, thereby allowing binding of SNRPD3 and SNRPB to complete assembly of the core snRNP. Within the SMN complex, GEMIN5 recognizes and delivers the small nuclear RNAs (snRNAs) to the SMN complex. Binds to the 7-methylguanosine cap of RNA molecules. The polypeptide is Component of gems protein 5 (gemin5) (Dictyostelium discoideum (Social amoeba)).